Here is a 699-residue protein sequence, read N- to C-terminus: Mannan-binding lectin serine protease 1 (699 aa).

The N-terminal stretch at 1–19 (MRWLLLYYALCFSLSKASA) is a signal peptide. The CUB 1 domain maps to 20-138 (HTVELNNMFG…TGFDAHYMAV (119 aa)). The homodimerization stretch occupies residues 20 to 184 (HTVELNNMFG…HTDNRTCRVE (165 aa)). Residues 20–184 (HTVELNNMFG…HTDNRTCRVE (165 aa)) form an interaction with MBL2 region. Residues 20 to 278 (HTVELNNMFG…STQSHSVLIL (259 aa)) are interaction with FCN2. Asn-49 carries N-linked (GlcNAc...) asparagine glycosylation. The Ca(2+) site is built by Glu-68, Asp-76, Asp-121, Ser-123, Asp-139, Val-140, and Glu-142. Cys-73 and Cys-91 are oxidised to a cystine. The EGF-like; calcium-binding domain maps to 139–182 (DVDECKEREDEELSCDHYCHNYIGGYYCSCRFGYILHTDNRTCR). Intrachain disulfides connect Cys-143–Cys-157, Cys-153–Cys-166, Cys-168–Cys-181, and Cys-185–Cys-212. Residues Asn-159, Tyr-160, and Gly-163 each contribute to the Ca(2+) site. Asn-159 is modified ((3R)-3-hydroxyasparagine). N-linked (GlcNAc...) (complex) asparagine glycosylation is present at Asn-178. Residues 185–297 (CSDNLFTQRT…RGWRLSYRAA (113 aa)) form the CUB 2 domain. Ca(2+)-binding residues include Glu-235, Asp-245, Asp-282, and Ser-284. Cys-242 and Cys-260 form a disulfide bridge. Sushi domains follow at residues 299–364 (NECP…TCKI) and 365–434 (VDCR…TCLP). 6 cysteine pairs are disulfide-bonded: Cys-301-Cys-349, Cys-329-Cys-362, Cys-367-Cys-414, Cys-397-Cys-432, Cys-436-Cys-572, and Cys-475-Cys-491. Asn-385 carries an N-linked (GlcNAc...) (complex) asparagine glycan. N-linked (GlcNAc...) asparagine glycosylation occurs at Asn-407. Positions 449–696 (IFNGRPAQKG…NKDWIQRVTG (248 aa)) constitute a Peptidase S1 domain. Catalysis depends on His-490, which acts as the Charge relay system. Leu-533 carries N-linked (GlcNAc) asparagine glycosylation. The Charge relay system role is filled by Asp-552. Glu-599 is a glycosylation site (N-linked (GlcNAc) asparagine). Intrachain disulfides connect Cys-614-Cys-631 and Cys-642-Cys-672. Ser-646 serves as the catalytic Charge relay system.

It belongs to the peptidase S1 family. Homodimer. Interacts with the oligomeric lectins MBL2, FCN2 and FCN3; triggers the lectin pathway of complement through activation of C3. Interacts with SERPING1. Interacts with COLEC11; probably triggers the lectin pathway of complement. Post-translationally, the iron and 2-oxoglutarate dependent 3-hydroxylation of aspartate and asparagine is (R) stereospecific within EGF domains. N-glycosylated. Some N-linked glycan are of the complex-type. In terms of processing, autoproteolytic processing of the proenzyme produces the active enzyme composed on the heavy and the light chain held together by a disulfide bond. Isoform 1 but not isoform 2 is activated through autoproteolytic processing. Protein of the plasma which is primarily expressed by liver.

It localises to the secreted. With respect to regulation, inhibited by SERPING1 and A2M. Its function is as follows. Functions in the lectin pathway of complement, which performs a key role in innate immunity by recognizing pathogens through patterns of sugar moieties and neutralizing them. The lectin pathway is triggered upon binding of mannan-binding lectin (MBL) and ficolins to sugar moieties which leads to activation of the associated proteases MASP1 and MASP2. Functions as an endopeptidase and may activate MASP2 or C2 or directly activate C3 the key component of complement reaction. Isoform 2 may have an inhibitory effect on the activation of the lectin pathway of complement or may cleave IGFBP5. Also plays a role in development. This is Mannan-binding lectin serine protease 1 (MASP1) from Homo sapiens (Human).